The primary structure comprises 208 residues: Small ribosomal subunit protein uS4 (208 aa).

The 63-residue stretch at 95–157 (RRIDNIVYRA…DSLKKLIRSN (63 aa)) folds into the S4 RNA-binding domain.

Belongs to the universal ribosomal protein uS4 family. In terms of assembly, part of the 30S ribosomal subunit. Contacts protein S5. The interaction surface between S4 and S5 is involved in control of translational fidelity.

In terms of biological role, one of the primary rRNA binding proteins, it binds directly to 16S rRNA where it nucleates assembly of the body of the 30S subunit. Its function is as follows. With S5 and S12 plays an important role in translational accuracy. This chain is Small ribosomal subunit protein uS4, found in Borrelia garinii subsp. bavariensis (strain ATCC BAA-2496 / DSM 23469 / PBi) (Borreliella bavariensis).